A 561-amino-acid chain; its full sequence is Mercuric reductase (561 aa).

The region spanning 2–65 (THLKITGMTC…AVAGLGYKAT (64 aa)) is the HMA domain. Residues Cys-11 and Cys-14 each coordinate a metal cation. Residues Ala-110, Gly-130, and Thr-135 each coordinate FAD. Residues Cys-136 and Cys-141 are joined by a disulfide bond. FAD-binding residues include Lys-145, Ala-211, Asp-403, and Val-411. 2 residues coordinate Hg(2+): Cys-558 and Cys-559.

Belongs to the class-I pyridine nucleotide-disulfide oxidoreductase family. In terms of assembly, homodimer. It depends on FAD as a cofactor.

It catalyses the reaction Hg + NADP(+) + H(+) = Hg(2+) + NADPH. Its function is as follows. Resistance to Hg(2+) in bacteria appears to be governed by a specialized system which includes mercuric reductase. MerA protein is responsible for volatilizing mercury as Hg(0). Plays a pivotal role in mercury resistance under thiol-depleted conditions and cell protection. Protects cells under thiol-depleted conditions. The protein is Mercuric reductase (merA) of Pseudomonas aeruginosa.